A 172-amino-acid chain; its full sequence is Large ribosomal subunit protein uL10 (172 aa).

This sequence belongs to the universal ribosomal protein uL10 family. In terms of assembly, part of the ribosomal stalk of the 50S ribosomal subunit. The N-terminus interacts with L11 and the large rRNA to form the base of the stalk. The C-terminus forms an elongated spine to which L12 dimers bind in a sequential fashion forming a multimeric L10(L12)X complex.

Forms part of the ribosomal stalk, playing a central role in the interaction of the ribosome with GTP-bound translation factors. This is Large ribosomal subunit protein uL10 from Chlorobium luteolum (strain DSM 273 / BCRC 81028 / 2530) (Pelodictyon luteolum).